The primary structure comprises 328 residues: UPF0324 membrane protein AF_1621 (328 aa).

11 consecutive transmembrane segments (helical) span residues 21 to 39, 43 to 60, 73 to 95, 101 to 123, 130 to 152, 162 to 184, 191 to 213, 223 to 240, 245 to 267, 271 to 293, and 305 to 327; these read LQMLLLLLLCGAAAYIINL, ALEPLFLALVFGIVAGNL, YVPFLLPIGITLYGVNINIPYLG, IVAATLISTSLIFLTVFWLSSRL, SILLACGSGICGVSAIAIISPLI, AIMIITAVGLTGAILYPSIAHYA, FAVLAGATLHQTGIVKISSQLFG, GIRIAMIALVVLILSIIY, FYVPWYIVSFLGVALFSSTYLPG, QALRPLATVMFATTLAAICYTVN, and LFASYAGWAVGVAFVLLLLGSGA.

The protein belongs to the UPF0324 family.

The protein localises to the cell membrane. The polypeptide is UPF0324 membrane protein AF_1621 (Archaeoglobus fulgidus (strain ATCC 49558 / DSM 4304 / JCM 9628 / NBRC 100126 / VC-16)).